The sequence spans 373 residues: P2Y purinoceptor 1 (373 aa).

Residues 1 to 51 (MTEVLWPAAPNGTDAAFLASPGFHWGNSTATSTAAAAAPFRCALTKTGFQF) lie on the Extracellular side of the membrane. N-linked (GlcNAc...) asparagine glycosylation is found at asparagine 11 and asparagine 27. Cystine bridges form between cysteine 42–cysteine 296 and cysteine 124–cysteine 202. Lysine 46 contacts ADP. The chain crosses the membrane as a helical span at residues 52–74 (YYLPAVYIVVFIIGFLGNSIAIW). Over 75-87 (MFVFHMKPWSGIS) the chain is Cytoplasmic. The helical transmembrane segment at 88 to 109 (VYMFNLALADFLYVLTLPALIF) threads the bilayer. Topologically, residues 110–125 (YYFNKTNWIFGDAMCK) are extracellular. N-linked (GlcNAc...) asparagine glycosylation occurs at asparagine 113. Residues 126 to 147 (LQRFIFHVNLYGSILFLTCISA) traverse the membrane as a helical segment. At 148–166 (HRYSGVVYPLKSLGRLKKK) the chain is on the cytoplasmic side. A helical transmembrane segment spans residues 167-188 (NAVYISVLVWLIVVVAISPILF). Residues 189–214 (YSGTGIRKNKTITCYDTTSDEYLRSY) lie on the Extracellular side of the membrane. Asparagine 197 carries N-linked (GlcNAc...) asparagine glycosylation. 203–205 (YDT) lines the ADP pocket. A helical membrane pass occupies residues 215–237 (FIYSMCTTVAMFCVPLVLILGCY). Residues 238-260 (GLIVRALIYKDLDNSPLRRKSIY) lie on the Cytoplasmic side of the membrane. A helical membrane pass occupies residues 261–284 (LVIIVLTVFAVSYIPFHVMKTMNL). Residues 283-287 (NLRAR), 303-306 (YATY), and arginine 310 each bind ADP. Residues 285-303 (RARLDFQTPEMCTFNDRVY) are Extracellular-facing. Residues 304 to 325 (ATYQVTRGLASLNSCVDPILYF) form a helical membrane-spanning segment. Topologically, residues 326–373 (LAGDTFRRRLSRATRKASRRSEANLQSKSEDMTLNILSEFKQNGDTSL) are cytoplasmic.

It belongs to the G-protein coupled receptor 1 family.

Its subcellular location is the cell membrane. Receptor for extracellular adenine nucleotides such as ADP. In platelets, binding to ADP leads to mobilization of intracellular calcium ions via activation of phospholipase C, a change in platelet shape, and ultimately platelet aggregation. This Cavia porcellus (Guinea pig) protein is P2Y purinoceptor 1 (P2RY1).